The primary structure comprises 628 residues: Alpha-L-arabinofuranosidase A (628 aa).

The N-terminal stretch at 1-25 is a signal peptide; that stretch reads MVAFSALSGVSALSLLLCLVQHAHG. Residues N36, N51, N74, N152, N171, N260, N359, and N493 are each glycosylated (N-linked (GlcNAc...) asparagine).

This sequence belongs to the glycosyl hydrolase 51 family.

The protein resides in the secreted. It catalyses the reaction Hydrolysis of terminal non-reducing alpha-L-arabinofuranoside residues in alpha-L-arabinosides.. The protein operates within glycan metabolism; L-arabinan degradation. Alpha-L-arabinofuranosidase involved in the degradation of arabinoxylan, a major component of plant hemicellulose. Acts only on small linear 1,5-alpha-linked L-arabinofuranosyl oligosaccharides. The sequence is that of Alpha-L-arabinofuranosidase A (abfA) from Aspergillus kawachii (strain NBRC 4308) (White koji mold).